Reading from the N-terminus, the 364-residue chain is MDFFYIGVMSGSSLDGIDIALLKQDDRSRLLATHYIPMPEDLHAELLGLCSSGADELARAAIAEQKWCRLVAQGVQTLLQDQNMVPAQIRAIGSHGQTIRHEPSRGYSIQIGNPALLAELTEITVVSDFRRRDIAAGGQGAPLVPAFHEALFDDNKDHRAVLNIGGFSNLSLIESDRPVEGFDCGPGNVLLDAWISSQLHESYDKDGAWSASGKVDSALLQKLLSDQFFLTKGPKSTGREVFNLGWVKHHLFQSKTLAPEDVQATLLELTALTITDSLKSAQPITRELLVCGGGAHNKALMKRLAELLPDTEVSSTEKFGVNPDWVEAMAFAWLAHCCLEGVPANRPTVTGAKGRRVLGAIYPA.

Residue 11 to 18 (GSSLDGID) participates in ATP binding.

The protein belongs to the anhydro-N-acetylmuramic acid kinase family.

The enzyme catalyses 1,6-anhydro-N-acetyl-beta-muramate + ATP + H2O = N-acetyl-D-muramate 6-phosphate + ADP + H(+). It participates in amino-sugar metabolism; 1,6-anhydro-N-acetylmuramate degradation. It functions in the pathway cell wall biogenesis; peptidoglycan recycling. In terms of biological role, catalyzes the specific phosphorylation of 1,6-anhydro-N-acetylmuramic acid (anhMurNAc) with the simultaneous cleavage of the 1,6-anhydro ring, generating MurNAc-6-P. Is required for the utilization of anhMurNAc either imported from the medium or derived from its own cell wall murein, and thus plays a role in cell wall recycling. The polypeptide is Anhydro-N-acetylmuramic acid kinase (Pseudomonas syringae pv. syringae (strain B728a)).